We begin with the raw amino-acid sequence, 439 residues long: Agnestins biosynthesis cluster transcriptional coactivator AgnL9 (439 aa).

An HTH iclR-type domain is found at 79–149 (MTIQTQLLAC…EPGHITHSAL (71 aa)). The segment at residues 109 to 128 (MKDVSELIDVPENQLGRIVR) is a DNA-binding region (H-T-H motif).

It localises to the nucleus. Functionally, transcriptional coactivator; part of the gene cluster that mediates the biosynthesis of agnestins, dihydroxy-xanthone metabolites. In Paecilomyces divaricatus (Penicillium divaricatum), this protein is Agnestins biosynthesis cluster transcriptional coactivator AgnL9.